The primary structure comprises 95 residues: IgNAR transmembrane form NE (95 aa).

The 36-residue stretch at 1-36 folds into the Ig-like domain; sequence LTFSTRSLLNLPAVEWKSGAKYTCTASHSPSQSTVK. A compositionally biased stretch (polar residues) spans 24–35; sequence CTASHSPSQSTV. A disordered region spans residues 24-79; that stretch reads CTASHSPSQSTVKRVIRNPKESPKGSSETRKSPLEIMESPEDYGTEEDQLENVNED. Positions 41–56 are enriched in basic and acidic residues; it reads NPKESPKGSSETRKSP. Over residues 61–77 the composition is skewed to acidic residues; that stretch reads ESPEDYGTEEDQLENVN. An N-linked (GlcNAc...) asparagine glycan is attached at Asn-81.

As to expression, expressed mainly in lymphoid tissues including spleen, epigonal organ and circulating lymphocytes. Also expressed at low levels in the pancreas.

This chain is IgNAR transmembrane form NE, found in Ginglymostoma cirratum (Nurse shark).